The sequence spans 155 residues: Small ribosomal subunit protein uS15 (155 aa).

A compositionally biased stretch (basic residues) spans Met1–Gly10. A disordered region spans residues Met1–Asp66. Acidic residues predominate over residues Glu21–Ile33. Positions Glu34 to His45 are enriched in basic and acidic residues.

Belongs to the universal ribosomal protein uS15 family. Part of the 30S ribosomal subunit.

The protein is Small ribosomal subunit protein uS15 of Halobacterium salinarum (strain ATCC 700922 / JCM 11081 / NRC-1) (Halobacterium halobium).